The following is a 452-amino-acid chain: MKLLSRAGSFSRFYSLKVAPKLKTSAPGGVPLQPQELEFTKLPNGLVIASLENYAPLSRIGLFIKAGSRYENYNYLGTSHLLRLASTLTTKGASSFKITRGIEAVGGKLSVTATRENMAYTVEGIRDDIEILMEFLLNVTTAPEFRRWEVAALRSQLKIDKAVAFQNPQTRIIENLHDVAYKNALANPLYCPDYRMGKITSEELHYFVQNHFTSARMALVGLGVSHSILKEVAEQFLNIRGGLGLAGAKAKYRGGEIREQNGDNLVHAAIVAESAAIGNAEANAFSVLQHLLGAGPHIKRGNNTTSLLSQSVAKGSQQPFDVSAFNASYSDSGLFGIYTVSQAAAAGDVINAAYNQVKAVAQGNLSSADVQAAKNKLKAGYLMSVETSEGFLSEIGSQALATGSYMPPPTVLQQIDAVADADVVKAAKKFVSGKKSMTASGNLGHTPFLDEL.

The N-terminal 14 residues, 1–14 (MKLLSRAGSFSRFY), are a transit peptide targeting the mitochondrion. Residues K65, K198, and K249 each carry the N6-acetyllysine modification. S367 is modified (phosphoserine).

It belongs to the peptidase M16 family. UQCRC2/QCR2 subfamily. In terms of assembly, component of the ubiquinol-cytochrome c oxidoreductase (cytochrome b-c1 complex, complex III, CIII), a multisubunit enzyme composed of 11 subunits. The complex is composed of 3 respiratory subunits cytochrome b, cytochrome c1 and Rieske protein UQCRFS1, 2 core protein subunits UQCRC1/QCR1 and UQCRC2/QCR2, and 6 low-molecular weight protein subunits UQCRH/QCR6, UQCRB/QCR7, UQCRQ/QCR8, UQCR10/QCR9, UQCR11/QCR10 and subunit 9, the cleavage product of Rieske protein UQCRFS1. The complex exists as an obligatory dimer and forms supercomplexes (SCs) in the inner mitochondrial membrane with NADH-ubiquinone oxidoreductase (complex I, CI) and cytochrome c oxidase (complex IV, CIV), resulting in different assemblies (supercomplex SCI(1)III(2)IV(1) and megacomplex MCI(2)III(2)IV(2)). Interacts with RAB5IF. Interacts with STMP1. Expressed in the head region and flagellum of epididymal sperm.

It localises to the mitochondrion inner membrane. Functionally, component of the ubiquinol-cytochrome c oxidoreductase, a multisubunit transmembrane complex that is part of the mitochondrial electron transport chain which drives oxidative phosphorylation. The respiratory chain contains 3 multisubunit complexes succinate dehydrogenase (complex II, CII), ubiquinol-cytochrome c oxidoreductase (cytochrome b-c1 complex, complex III, CIII) and cytochrome c oxidase (complex IV, CIV), that cooperate to transfer electrons derived from NADH and succinate to molecular oxygen, creating an electrochemical gradient over the inner membrane that drives transmembrane transport and the ATP synthase. The cytochrome b-c1 complex catalyzes electron transfer from ubiquinol to cytochrome c, linking this redox reaction to translocation of protons across the mitochondrial inner membrane, with protons being carried across the membrane as hydrogens on the quinol. In the process called Q cycle, 2 protons are consumed from the matrix, 4 protons are released into the intermembrane space and 2 electrons are passed to cytochrome c. The 2 core subunits UQCRC1/QCR1 and UQCRC2/QCR2 are homologous to the 2 mitochondrial-processing peptidase (MPP) subunits beta-MPP and alpha-MPP respectively, and they seem to have preserved their MPP processing properties. May be involved in the in situ processing of UQCRFS1 into the mature Rieske protein and its mitochondrial targeting sequence (MTS)/subunit 9 when incorporated into complex III. This chain is Cytochrome b-c1 complex subunit 2, mitochondrial (Uqcrc2), found in Rattus norvegicus (Rat).